The primary structure comprises 162 residues: uncharacterized protein (162 aa).

Positions 1-21 (MRLCGLLIFLSYIVYVDNAVT) are cleaved as a signal peptide.

This is an uncharacterized protein from Caenorhabditis elegans.